A 358-amino-acid chain; its full sequence is sn-glycerol-3-phosphate import ATP-binding protein UgpC (358 aa).

In terms of domain architecture, ABC transporter spans 4-235 (VELKQVRKTY…PATLFVASFI (232 aa)). 37–44 (GPSGCGKS) contributes to the ATP binding site.

This sequence belongs to the ABC transporter superfamily. sn-glycerol-3-phosphate importer (TC 3.A.1.1.3) family. In terms of assembly, the complex is composed of two ATP-binding proteins (UgpC), two transmembrane proteins (UgpA and UgpE) and a solute-binding protein (UgpB).

It localises to the cell inner membrane. It carries out the reaction sn-glycerol 3-phosphate(out) + ATP + H2O = sn-glycerol 3-phosphate(in) + ADP + phosphate + H(+). Functionally, part of the ABC transporter complex UgpBAEC involved in sn-glycerol-3-phosphate (G3P) import. Responsible for energy coupling to the transport system. The polypeptide is sn-glycerol-3-phosphate import ATP-binding protein UgpC (Roseobacter denitrificans (strain ATCC 33942 / OCh 114) (Erythrobacter sp. (strain OCh 114))).